The sequence spans 356 residues: Beta-hexosaminidase (356 aa).

Residues Asp75, Arg83, Arg150, and 180 to 181 contribute to the substrate site; that span reads KH. Catalysis depends on His193, which acts as the Proton donor/acceptor. The Nucleophile role is filled by Asp264.

It belongs to the glycosyl hydrolase 3 family. NagZ subfamily.

Its subcellular location is the cytoplasm. The enzyme catalyses Hydrolysis of terminal non-reducing N-acetyl-D-hexosamine residues in N-acetyl-beta-D-hexosaminides.. Its pathway is cell wall biogenesis; peptidoglycan recycling. Its function is as follows. Plays a role in peptidoglycan recycling by cleaving the terminal beta-1,4-linked N-acetylglucosamine (GlcNAc) from peptide-linked peptidoglycan fragments, giving rise to free GlcNAc, anhydro-N-acetylmuramic acid and anhydro-N-acetylmuramic acid-linked peptides. This Aromatoleum aromaticum (strain DSM 19018 / LMG 30748 / EbN1) (Azoarcus sp. (strain EbN1)) protein is Beta-hexosaminidase.